Consider the following 5376-residue polypeptide: Zonadhesin (5376 aa).

The signal sequence occupies residues 1–17 (MALPVWTLMLLVGAAWG). Residues 18-5310 (QEQVPAWRPN…TTRKKIEASS (5293 aa)) lie on the Extracellular side of the membrane. MAM domains lie at 45 to 210 (SKCD…TCNQ), 215 to 374 (QMCT…PCGE), and 377 to 542 (PQCD…PCRV). N-linked (GlcNAc...) asparagine glycosylation is found at asparagine 339 and asparagine 499. Residues 547–1170 (EIPSSPLLPP…PTTGVSTTES (624 aa)) are 80 X heptapeptide repeats (approximate) (mucin-like domain). Disordered stretches follow at residues 553–579 (LLPPTGPSESTVPTLPMEQPTSPTKAT) and 1037–1113 (TVPP…TVST). The segment covering 1052-1113 (TEVTTTPPEE…IASEETTVST (62 aa)) has biased composition (low complexity). The 50-residue stretch at 1171-1220 (CPPNAHIELCACPASCESPKPSCQPPCIPGCVCNPGFLFSNNQCINESSC) folds into the TIL 1 domain. N-linked (GlcNAc...) asparagine glycosylation is found at asparagine 1216, asparagine 1239, and asparagine 1314. Residues 1227 to 1275 (KHYKPGEEWFTPNCTERCRCLPGSLMECQISQCGTHTVCQLKSDQYQCE) form the VWFC 1 domain. The 183-residue stretch at 1280 to 1462 (ATCLVYGDLH…DKDWVSSRCQ (183 aa)) folds into the VWFD 1 domain. 2 disulfides stabilise this stretch: cysteine 1282/cysteine 1417 and cysteine 1304/cysteine 1461. One can recognise a TIL 2 domain in the interval 1555 to 1608 (CPKNSRYSLCAKPCPETCHPISTTQHCSDKCVEGCECDPGFILSGSECVPSSQC). The VWFC 2 domain occupies 1609-1664 (GCTSFQGRYFKLQEQWFNPDCKEICTCESHNHILCKPWKCKAQEACSYKNGVLGCH). Residues 1669–1849 (ATCMVSGDPH…ILEASDPGCF (181 aa)) enclose the VWFD 2 domain. Intrachain disulfides connect cysteine 1671-cysteine 1809 and cysteine 1693-cysteine 1848. Residues asparagine 1814, asparagine 1908, and asparagine 1933 are each glycosylated (N-linked (GlcNAc...) asparagine). In terms of domain architecture, TIL 3 spans 1941–1995 (CPPRSSYNPCANSCPATCLTLSTPRDCPTLPCVEGCECQSGHILSGTTCVPLRQC). One can recognise a VWFC 3 domain in the interval 1996 to 2052 (GCSDQDGSYHLLGESWYTEKTCTTLCTCSAHSNITCSPTACKANHVCLRQEGLLRCA). Asparagine 2028, asparagine 2111, asparagine 2142, and asparagine 2332 each carry an N-linked (GlcNAc...) asparagine glycan. A VWFD 3 domain is found at 2056-2239 (GECRISEDSQ…KDKSMDPNCQ (184 aa)). 2 disulfide bridges follow: cysteine 2058-cysteine 2200 and cysteine 2080-cysteine 2238. In terms of domain architecture, TIL 4 spans 2340–2398 (CPAHSHYTNCLPSCPPSCLDPDSRCEGSGHKVPATCREGCICQPDYVLLNDKCVLRSHC). The VWFC 4 domain maps to 2399-2454 (GCKDAQGVFIPAGKTWISEDCTQSCTCMKGSMRCWDFQCPPGTYCKNSNDGSSNCV). A TIL 5 domain is found at 2460–2518 (CPAHSKFTDCLPPCHPSCSDPDGHCEGISTNAHSNCKEGCVCQPGYVLRNDKCVLRIEC). One can recognise a VWFC 5 domain in the interval 2519–2574 (GCQHTQGGFIPAGKNWTSRGCSQSCDCMEGVIRCQNFQCPSGTYCQDIEDGTSNCA). N-linked (GlcNAc...) asparagine glycans are attached at residues asparagine 2533 and asparagine 2575. Residues 2580–2638 (CPAHSSFTNCLPPCQPSCSDPEGHCGGSTTKAPSACQEGCVCEPDYVVLNNKCVPRIEC) form the TIL 6 domain. The VWFC 6 domain maps to 2639–2694 (GCKDAQGVLIPADKIWINKGCTQTCACVTGTIHCRDFQCPSGTYCKDIKDDASNCT). A glycan (N-linked (GlcNAc...) asparagine) is linked at asparagine 2692. The 59-residue stretch at 2700–2758 (CPDHSLYTHCLPSCLLSCSDPDGLCRGTSPEAPSTCKEGCVCDPDYVLSNDKCVLRIEC) folds into the TIL 7 domain. The 56-residue stretch at 2759-2814 (GCKDAQGVLIPAGKTWINRGCTQSCSCMGGAIQCQNFKCPSEAYCQDMEDGNSNCT) folds into the VWFC 7 domain. N-linked (GlcNAc...) asparagine glycosylation occurs at asparagine 2812. In terms of domain architecture, TIL 8 spans 2820–2878 (CPAHSHYTNCLPTCQPSCSDPDGHCEGSSTKAPSACKEGCVCEPDYVMLNNKCVPRIEC). Positions 2879–2934 (GCKDTQGVLIPADKTWINRGCTQSCTCRGGAIQCQKYHCSSGTYCKDMEDDSSSCA) constitute a VWFC 8 domain. The TIL 9 domain maps to 2940 to 2998 (CPAHSHFTNCLPPCQPSCLDSEGHCEGSTTKAPSACQEGCVCEPDYVVLNNKCVPRIEC). One can recognise a VWFC 9 domain in the interval 2999-3054 (GCKDAQGVLIPADKTWINRGCTQSCTCKGGAIQCQKFQCPSETYCKDIEDGNSNCT). 4 N-linked (GlcNAc...) asparagine glycosylation sites follow: asparagine 3052, asparagine 3065, asparagine 3144, and asparagine 3172. One can recognise a TIL 10 domain in the interval 3060–3118 (CPANSNFTSCLPSCQPSCSNTDVHCEGSSPNTLSSCREGCVCQSGYVLHNDKCILRNQC). The 56-residue stretch at 3119–3174 (GCKDAQGALIPEGKTWITSGCTQSCNCTGGAIQCQNFQCPLKTYCKDLKDGSSNCT) folds into the VWFC 10 domain. The TIL 11 domain maps to 3180–3238 (CPAHSRYTNCLPSCPPLCLDPEGLCEGTSPKVPSTCREGCICQPGYLMHKNKCVLRIFC). The VWFC 11 domain maps to 3239-3294 (GCKNTQGAFISADKTWISRGCTQSCTCPAGAIHCRNFKCPSGTYCKNGDNGSSNCT). 2 N-linked (GlcNAc...) asparagine glycosylation sites follow: asparagine 3288 and asparagine 3292. The 56-residue stretch at 3300 to 3355 (CPTNSQFTDCLPSCVPSCSNRCEVTSPSVPSSCREGCLCNHGFVFSEDKCVPRTQC) folds into the TIL 12 domain. Residues 3356–3411 (GCKDARGAIIPAGKTWTSKGCTQSCACVEGNIQCQNFQCPPETYCKDNSEGSSTCT) enclose the VWFC 12 domain. The TIL 13 domain occupies 3417–3475 (CPAHTQYTSCLPSCLPSCLDPEGLCKDISPKVPSTCKEGCVCQSGYVLNSDKCVLRAEC). The VWFC 13 domain maps to 3476–3531 (DCKDAQGALIPAGKTWTSPGCTQSCACMGGAVQCQSSQCPPGTYCKDNEDGNSNCA). In terms of domain architecture, TIL 14 spans 3537 to 3595 (CPAHSLFTNCLPPCLPSCLDPDGLCKGASPKVPSTCKEGCICQSGYVLSNNKCLLRNRC). The VWFC 14 domain occupies 3596–3651 (GCKDAHGALIPEDKTWVSRGCTQSCVCTGGSIQCLSSQCPPGAYCKDNEDGSSNCA). One can recognise a TIL 15 domain in the interval 3657-3715 (CPANSHYTDCFPPCPPSCSDPEGHCEASGPRVLSTCREGCLCNPGFVLDRDKCVPRVEC). Positions 3716 to 3771 (GCKDAQGALIPSGKTWTSPGCTQSCACMGGVVQCQSSQCPPGTYCKDNEDGNSNCA) constitute a VWFC 15 domain. The TIL 16 domain maps to 3777–3835 (CPTHSNYTDCLPFCLPSCLDPSALCGGTSPKGPSTCKEGCVCQPGYVLDKDKCILKIEC). The N-linked (GlcNAc...) asparagine glycan is linked to asparagine 3782. The VWFC 16 domain maps to 3836–3891 (GCRDTQGAVIPAGKTWLSTGCIQSCACVEGTIQCQNFQCPPGTYCNHNNNCAKIPL). Residues 3893–3951 (CPAHSHFTSCLPSCPPSCANLDGSCEQTSPKVPSTCKEGCLCQPGYFLNNGKCVLQTHC) enclose the TIL 17 domain. The 56-residue stretch at 3952–4007 (DCKDAEGGLVPAGKTWTSKDCTQSCACTGGAVQCQNFQCPLGTYCKDSGDGSSNCT) folds into the VWFC 17 domain. Asparagine 4005 carries an N-linked (GlcNAc...) asparagine glycan. Residues 4029-4087 (CPAHSHFTSCLPSCPPSCSNLDGSCVESNFKAPSVCKKGCICQPGYLLNNDKCVLRIQC) enclose the TIL 18 domain. Residues 4088–4143 (GCKDTQGGLIPAGRTWISSDCTKSCSCMGGIIQCRDFQCPPGTYCKESNDSSRTCA) enclose the VWFC 18 domain. Asparagine 4136 carries N-linked (GlcNAc...) asparagine glycosylation. The TIL 19 domain maps to 4149–4207 (CPAHSHYTNCLPACSRSCTDLDGHCEGTSPKVPSPCKEGCLCQPGYVVHNHKCVLQIHC). One can recognise a VWFC 19 domain in the interval 4208 to 4262 (GCKDAQGGFVPAGKTWISRGCTQSCACVGGAVQCHNFTCPTGTQCQNSSCSKITV). N-linked (GlcNAc...) asparagine glycans are attached at residues asparagine 4243 and asparagine 4254. One can recognise a TIL 20 domain in the interval 4264–4322 (CPAHSQYTTCLPSCLPSCFDPEGLCGGASPRAPSTCREGCVCEADYVLREDKCVLRTQC). The 56-residue stretch at 4323-4378 (GCKDAQGDLIPANKTWLTRGCAQKCTCKGGNIHCWNFKCPLGTECKDSVDGGSNCT) folds into the VWFC 20 domain. N-linked (GlcNAc...) asparagine glycans are attached at residues asparagine 4335 and asparagine 4376. One can recognise a TIL 21 domain in the interval 4384-4442 (CPAHSHHTYCLPSCIPSCSNVNDRCESTSLQRPSTCIEGCLCHSGFVFSKDKCVPRTQC). The 56-residue stretch at 4443 to 4498 (GCKDSQGTLIPAGKNWITTGCSQRCTCTGGLVQCHDFQCPSGAECQDIEDGNSNCV) folds into the VWFC 21 domain. Residues 4504 to 4562 (CPAHSHYSKCLPPCQPSCSDPDGHCEGTSPEAPSTCEEGCVCEPDYVLSNDKCVPSSEC) form the TIL 22 domain. A VWFC 22 domain is found at 4563–4618 (GCKDAHGVLIPESKTWVSRGCTKNCTCKGGTVQCHDFSCPTGSRCLDNNEGNSNCV). The N-linked (GlcNAc...) asparagine glycan is linked to asparagine 4586. In terms of domain architecture, TIL 23 spans 4624–4682 (CPAHSLYTNCLPSCLPSCSDPEGLCGGTSPEVPSTCKEGCICQSGYVLHKNKCMLRIHC). Positions 4683 to 4738 (DCKDFQGSLIKTGQTWISSGCSKICTCKGGFFQCQSYKCPSGTQCEESEDGSSNCV) constitute a VWFC 23 domain. The region spanning 4744–4802 (CPANSLYTHCLPTCLPSCSNPDGRCEGTSHKAPSTCREGCVCQPGYLLNKDTCVHKNQC) is the TIL 24 domain. In terms of domain architecture, VWFC 24 spans 4803–4858 (GCKDIRGNIIPAGNTWISSDCTQSCACTDGVIQCQNFVCPSGSHCQYNEDGSSDCA). The VWFD 4 domain occupies 4863–5038 (ERCTIFGDPY…SWEVKAQHAF (176 aa)). The cysteines at positions 4865 and 5001 are disulfide-linked. Asparagine 5136 carries N-linked (GlcNAc...) asparagine glycosylation. Positions 5150–5203 (CPANTVYQRCMTPCPASCAKFVTPKVCEGPCVEGCASLPGYIYSDTQSLPVTHC) constitute a TIL 25 domain. A VWFC 25 domain is found at 5204 to 5258 (GCTADGIYYKLGDSFVTNDCSQHCTCASQGILLCEPYGCRAGESCMVANFTRGCF). The N-linked (GlcNAc...) asparagine glycan is linked to asparagine 5252. The EGF-like domain maps to 5259–5295 (QDSPCLQNPCHNDGRCEEQGATFICHCDFGYGGEFCT). 3 cysteine pairs are disulfide-bonded: cysteine 5263-cysteine 5274, cysteine 5268-cysteine 5283, and cysteine 5285-cysteine 5294. Residues 5311–5337 (LVAILPGVLVMVLVPVLLPRVYVYMAT) traverse the membrane as a helical segment. Residues 5338 to 5376 (RTTMGRRRMKRKEKKLLRQSRLRLEDADVPEPTFKATEF) lie on the Cytoplasmic side of the membrane.

Probably forms covalent oligomers. In testis, primarily in haploid spermatids.

The protein localises to the cell membrane. Its function is as follows. Binds in a species-specific manner to the zona pellucida of the egg. May be involved in gamete recognition and/or signaling. This is Zonadhesin (Zan) from Mus musculus (Mouse).